Reading from the N-terminus, the 211-residue chain is Thymidylate kinase (211 aa).

Residue 7 to 14 (GCEGSGKS) coordinates ATP.

This sequence belongs to the thymidylate kinase family.

The catalysed reaction is dTMP + ATP = dTDP + ADP. Its function is as follows. Phosphorylation of dTMP to form dTDP in both de novo and salvage pathways of dTTP synthesis. The protein is Thymidylate kinase of Chlamydia abortus (strain DSM 27085 / S26/3) (Chlamydophila abortus).